Here is a 371-residue protein sequence, read N- to C-terminus: MISLHSSAIKASLYGSFPSSLRSTLSVSFSAGSLIRLPSVGKRNLSVVVSSGRDSSMSSNNVSRGSSSKVAAESFFRSVLGQMETVYLNRNPTPKSVLELVRSVDDQQLCYDHLAFRTFGIGGYGIDSLASFFLDYGYTPMDELKFPAKKLRALWFAPPNASAVPGGSGVNGPLPRVFISELLVDQMSSQTQDVIRKYTEASPNGKKYAGLSSALGTLTWEKPLSSEFEQLARESEYAAWTLVNGYALNHVTISVHRLKSHLNKIKKLNQFLEEKGIKLNSEGGVLKVSPDGGLQQSSTVADSISFKFADGVTKSIPCSYIEFAERLVLPQYQNIPESEIQESHRRDGFEVGNADKIFESTFQEQLSRRTG.

The transit peptide at 1–50 directs the protein to the chloroplast; sequence MISLHSSAIKASLYGSFPSSLRSTLSVSFSAGSLIRLPSVGKRNLSVVVS. Residues His-113 and Arg-117 each contribute to the 2-oxoadipate site. His-113 contacts Fe(2+). His-250 serves as a coordination point for Fe(2+). Residues Gln-296 and Tyr-320 each contribute to the 2-oxoadipate site. Glu-322 is a Fe(2+) binding site.

This sequence belongs to the 2-oxoadipate dioxygenase/decarboxylase family. It depends on Fe(2+) as a cofactor.

It is found in the plastid. The protein localises to the chloroplast. It carries out the reaction 2-oxoadipate + O2 = (R)-2-hydroxyglutarate + CO2. Its pathway is amino-acid degradation. Its function is as follows. Catalyzes the decarboxylation and hydroxylation of 2-oxoadipate (2OA) to form D-2-hydroxyglutarate (D-2-HGA). Is involved in a D-lysine catabolic pathway. The protein is 2-oxoadipate dioxygenase/decarboxylase, chloroplastic of Arabidopsis thaliana (Mouse-ear cress).